Reading from the N-terminus, the 609-residue chain is Ovochymase-2 (609 aa).

The N-terminal stretch at 1–22 is a signal peptide; it reads MPISKDKLILILGMVCLEQGHS. The propeptide at 23 to 51 is activation peptide; it reads ETLSSIRNPDCGQSLVKPQPQNYFSLFSR. A Peptidase S1 domain is found at 52–299; that stretch reads IVGGSQVEKG…VLPWILKHIQ (248 aa). A disulfide bridge links C77 with C93. The active-site Charge relay system is the H92. N-linked (GlcNAc...) asparagine glycosylation occurs at N104. A Ca(2+)-binding site is contributed by E119. The active-site Charge relay system is D142. 4 disulfides stabilise this stretch: C176-C246, C207-C225, C236-C265, and C311-C341. Residue S240 is the Charge relay system of the active site. CUB domains lie at 311–421 and 431–543; these read CSEP…YKAL and CRSL…ISFI. N356 is a glycosylation site (N-linked (GlcNAc...) asparagine). A disulfide bond links C365 and C384. N415 carries an N-linked (GlcNAc...) asparagine glycan. 2 disulfide bridges follow: C431–C458 and C485–C506. N-linked (GlcNAc...) asparagine glycosylation is found at N530 and N549. Positions 580 to 609 are disordered; sequence HTKPPYEEDIGEMPAIDSGLLKQGERRGKH.

This sequence belongs to the peptidase S1 family. In terms of tissue distribution, only expressed in uterus tissue. Expressed in the initial segment (IS) of the caput epididymis, the region most proximal to the testis.

It localises to the secreted. Functionally, may be required for sperm ADAM3 processing and consequential sperm fertilizing ability. In vitro, has an endopeptidase activity. This is Ovochymase-2 from Mus musculus (Mouse).